A 266-amino-acid chain; its full sequence is Enoyl-CoA hydratase EchA19 (266 aa).

Glutamate 120 is an active-site residue. N6-succinyllysine is present on lysine 135. Glutamate 140 is an active-site residue. Lysine 142 carries the post-translational modification N6-succinyllysine.

It belongs to the enoyl-CoA hydratase/isomerase family. Homotrimer; substrate probably binds in elongated tunnels between the subunits. Post-translationally, succinylated in vitro at pH 8.1, succinylation reduces specific activity of the enzyme 5.5-fold; succinyl-CoA is a downstream by-product of cholesterol degradation. Can be de-succinylated in vitro by NAD-dependent protein deacylase (AC P9WGG3). Succinylation may be a negative feedback regulator of cholesterol metabolism.

The enzyme catalyses (22E)-3-oxochola-4,22-dien-24-oyl-CoA + H2O = (22R)-hydroxy-3-oxo-chol-4-ene-24-oyl-CoA. Its pathway is steroid metabolism; cholesterol degradation. In terms of biological role, degradation of the cholesterol side chain involves 3 multistep beta-oxidation cycles, this may be involved in the second cycle. Hydrates 3-OCDO-CoA ((22E)-3-oxo-chol-4,22-dien-24-oyl-CoA) to make (22R)-HOCO-CoA (3-oxo-chol-4-ene-(22R)-hydroxy-24-oyl-CoA). Also acts on octenoyl-CoA. Not active on (E)-3-OCDS-CoA ((E)-3-oxocholest-4,24-dien-26-oyl-CoA) or 3-OPDC-CoA (3-oxo-4,17-pregnadiene-20-carboxyl-CoA). Hydrates the same substrate as ChsH3, but the 2 enzymes make different stereoisomers of the product. The polypeptide is Enoyl-CoA hydratase EchA19 (Mycobacterium tuberculosis (strain ATCC 25618 / H37Rv)).